Here is a 229-residue protein sequence, read N- to C-terminus: Adapter protein MecA (229 aa).

This sequence belongs to the MecA family. As to quaternary structure, homodimer.

Enables the recognition and targeting of unfolded and aggregated proteins to the ClpC protease or to other proteins involved in proteolysis. The protein is Adapter protein MecA of Latilactobacillus sakei subsp. sakei (strain 23K) (Lactobacillus sakei subsp. sakei).